The sequence spans 1631 residues: ALK tyrosine kinase receptor (1631 aa).

An N-terminal signal peptide occupies residues 1–18 (MGSVGLLGLLLLRLSVTA). Residues 19-1053 (SGSGAGTGSG…PHLPLSLVLS (1035 aa)) are Extracellular-facing. The disordered stretch occupies residues 20–53 (GSGAGTGSGTGSGTGTGTGQLVGSPATGPALQPR). Over residues 21–39 (SGAGTGSGTGSGTGTGTGQ) the composition is skewed to gly residues. Residues 60-82 (RLQRKSLAVDFVVPSLFRVYARD) form a heparin-binding region region. Asparagine 185, asparagine 260, asparagine 301, asparagine 340, asparagine 427, asparagine 440, asparagine 461, asparagine 579, asparagine 587, and asparagine 643 each carry an N-linked (GlcNAc...) asparagine glycan. Positions 280–443 (LECSFDFPCE…DFFALKNCSE (164 aa)) constitute an MAM 1 domain. Residues 494-652 (FYCNFENGFC…NISISLDCYL (159 aa)) enclose the MAM 2 domain. A disulfide bridge links cysteine 703 with cysteine 716. Asparagine 724 is a glycosylation site (N-linked (GlcNAc...) asparagine). A disulfide bridge links cysteine 798 with cysteine 809. 4 N-linked (GlcNAc...) asparagine glycosylation sites follow: asparagine 823, asparagine 878, asparagine 879, and asparagine 901. Cysteine 921 and cysteine 943 form a disulfide bridge. Asparagine 1001 carries N-linked (GlcNAc...) asparagine glycosylation. 3 disulfides stabilise this stretch: cysteine 1002/cysteine 1010, cysteine 1005/cysteine 1021, and cysteine 1023/cysteine 1036. The EGF-like stretch occupies residues 1002-1040 (CSHCEGDECHMDPESHKVICFCDHGTVLAEDGVSCIVSP). The helical transmembrane segment at 1054-1074 (VVTSALVAALVLAFSGIMIVY) threads the bilayer. At 1075–1631 (RRKHQELQAM…DALLKTPPGP (557 aa)) the chain is on the cytoplasmic side. In terms of domain architecture, Protein kinase spans 1131–1407 (ITLIRGLGHG…IEYCTQDPDV (277 aa)). ATP-binding positions include 1137–1145 (LGHGAFGEV) and lysine 1165. The active-site Proton acceptor is the aspartate 1264. Disordered stretches follow at residues 1423 to 1493 (EEKV…GHVN), 1526 to 1554 (WFTE…REGS), and 1609 to 1631 (FEGT…PPGP).

In terms of assembly, homodimer; homodimerizes following heparin- and ligand-binding. Interacts with CBL, IRS1, PIK3R1 and PLCG1. Interacts with FRS2 and SHC1. Interacts with PTN and MDK. Post-translationally, phosphorylated at tyrosine residues by autocatalysis, which activates kinase activity. In cells not stimulated by a ligand, receptor protein tyrosine phosphatase beta and zeta complex (PTPRB/PTPRZ1) dephosphorylates ALK at the sites in ALK that are undergoing autophosphorylation through autoactivation.

It localises to the cell membrane. The enzyme catalyses L-tyrosyl-[protein] + ATP = O-phospho-L-tyrosyl-[protein] + ADP + H(+). Activated upon ALKAL2 ligand-binding. ALKAL2-driven activation is coupled with heparin-binding. Following ligand-binding, homodimerizes and autophosphorylates, activating its kinase activity. Inactivated through dephosphorylation by receptor protein tyrosine phosphatase beta and zeta complex (PTPRB/PTPRZ1) when there is no stimulation by a ligand. Neuronal receptor tyrosine kinase that is essentially and transiently expressed in specific regions of the central and peripheral nervous systems and plays an important role in the genesis and differentiation of the nervous system. Also acts as a key thinness protein involved in the resistance to weight gain: in hypothalamic neurons, controls energy expenditure acting as a negative regulator of white adipose tissue lipolysis and sympathetic tone to fine-tune energy homeostasis. Following activation by ALKAL2 ligand at the cell surface, transduces an extracellular signal into an intracellular response. In contrast, ALKAL1 is not a potent physiological ligand for ALK. Ligand-binding to the extracellular domain induces tyrosine kinase activation, leading to activation of the mitogen-activated protein kinase (MAPK) pathway. Phosphorylates almost exclusively at the first tyrosine of the Y-x-x-x-Y-Y motif. Induces tyrosine phosphorylation of CBL, FRS2, IRS1 and SHC1, as well as of the MAP kinases MAPK1/ERK2 and MAPK3/ERK1. ALK activation may also be regulated by pleiotrophin (PTN) and midkine (MDK). PTN-binding induces MAPK pathway activation, which is important for the anti-apoptotic signaling of PTN and regulation of cell proliferation. MDK-binding induces phosphorylation of the ALK target insulin receptor substrate (IRS1), activates mitogen-activated protein kinases (MAPKs) and PI3-kinase, resulting also in cell proliferation induction. Drives NF-kappa-B activation, probably through IRS1 and the activation of the AKT serine/threonine kinase. Recruitment of IRS1 to activated ALK and the activation of NF-kappa-B are essential for the autocrine growth and survival signaling of MDK. The sequence is that of ALK tyrosine kinase receptor from Canis lupus familiaris (Dog).